Reading from the N-terminus, the 191-residue chain is Protein GrpE (191 aa).

Residues 1–11 (MTDSSNAHEAE) show a composition bias toward basic and acidic residues. 2 disordered regions span residues 1–22 (MTDS…DNEI) and 172–191 (KVSK…NNNE).

The protein belongs to the GrpE family. As to quaternary structure, homodimer.

Its subcellular location is the cytoplasm. Its function is as follows. Participates actively in the response to hyperosmotic and heat shock by preventing the aggregation of stress-denatured proteins, in association with DnaK and GrpE. It is the nucleotide exchange factor for DnaK and may function as a thermosensor. Unfolded proteins bind initially to DnaJ; upon interaction with the DnaJ-bound protein, DnaK hydrolyzes its bound ATP, resulting in the formation of a stable complex. GrpE releases ADP from DnaK; ATP binding to DnaK triggers the release of the substrate protein, thus completing the reaction cycle. Several rounds of ATP-dependent interactions between DnaJ, DnaK and GrpE are required for fully efficient folding. This Chlamydia abortus (strain DSM 27085 / S26/3) (Chlamydophila abortus) protein is Protein GrpE.